The sequence spans 377 residues: Beta sliding clamp (377 aa).

The protein belongs to the beta sliding clamp family. As to quaternary structure, forms a ring-shaped head-to-tail homodimer around DNA which binds and tethers DNA polymerases and other proteins to the DNA. The DNA replisome complex has a single clamp-loading complex (3 tau and 1 each of delta, delta', psi and chi subunits) which binds 3 Pol III cores (1 core on the leading strand and 2 on the lagging strand) each with a beta sliding clamp dimer. Additional proteins in the replisome are other copies of gamma, psi and chi, Ssb, DNA helicase and RNA primase.

Its subcellular location is the cytoplasm. Functionally, confers DNA tethering and processivity to DNA polymerases and other proteins. Acts as a clamp, forming a ring around DNA (a reaction catalyzed by the clamp-loading complex) which diffuses in an ATP-independent manner freely and bidirectionally along dsDNA. Initially characterized for its ability to contact the catalytic subunit of DNA polymerase III (Pol III), a complex, multichain enzyme responsible for most of the replicative synthesis in bacteria; Pol III exhibits 3'-5' exonuclease proofreading activity. The beta chain is required for initiation of replication as well as for processivity of DNA replication. This chain is Beta sliding clamp (dnaN), found in Staphylococcus epidermidis (strain ATCC 35984 / DSM 28319 / BCRC 17069 / CCUG 31568 / BM 3577 / RP62A).